Reading from the N-terminus, the 557-residue chain is Carbamoyl phosphate synthase large chain, N-terminal section (557 aa).

The tract at residues 1–402 (MPKRTDIKKI…ALLKAVRSLE (402 aa)) is carboxyphosphate synthetic domain. ATP is bound by residues R129, R169, G175, G176, K208, L210, E215, G241, V242, H243, Q285, and E299. The ATP-grasp domain maps to 133-328 (KETMESIGLK…IAKVAAKLAV (196 aa)). Mg(2+) is bound by residues Q285, E299, and N301. Q285, E299, and N301 together coordinate Mn(2+). The tract at residues 403-553 (LDRYGLAFPK…PYYTVDGQEI (151 aa)) is oligomerization domain.

It belongs to the CarB family. In terms of assembly, composed of two chains; the small (or glutamine) chain promotes the hydrolysis of glutamine to ammonia, which is used by the large (or ammonia) chain to synthesize carbamoyl phosphate. Tetramer of heterodimers (alpha,beta)4. Mg(2+) serves as cofactor. The cofactor is Mn(2+).

It carries out the reaction hydrogencarbonate + L-glutamine + 2 ATP + H2O = carbamoyl phosphate + L-glutamate + 2 ADP + phosphate + 2 H(+). The catalysed reaction is hydrogencarbonate + NH4(+) + 2 ATP = carbamoyl phosphate + 2 ADP + phosphate + 2 H(+). Its pathway is amino-acid biosynthesis; L-arginine biosynthesis; carbamoyl phosphate from bicarbonate: step 1/1. The protein operates within pyrimidine metabolism; UMP biosynthesis via de novo pathway; (S)-dihydroorotate from bicarbonate: step 1/3. Functionally, large subunit of the glutamine-dependent carbamoyl phosphate synthetase (CPSase). CPSase catalyzes the formation of carbamoyl phosphate from the ammonia moiety of glutamine, carbonate, and phosphate donated by ATP, constituting the first step of 2 biosynthetic pathways, one leading to arginine and/or urea and the other to pyrimidine nucleotides. The large subunit (synthetase) binds the substrates ammonia (free or transferred from glutamine from the small subunit), hydrogencarbonate and ATP and carries out an ATP-coupled ligase reaction, activating hydrogencarbonate by forming carboxy phosphate which reacts with ammonia to form carbamoyl phosphate. In Aquifex aeolicus (strain VF5), this protein is Carbamoyl phosphate synthase large chain, N-terminal section (carB1).